The primary structure comprises 348 residues: Methylthioribose-1-phosphate isomerase (348 aa).

Substrate contacts are provided by residues 53–55 (RGA), Arg-93, and Gln-197. Asp-238 functions as the Proton donor in the catalytic mechanism. 248–249 (NK) contributes to the substrate binding site.

The protein belongs to the eIF-2B alpha/beta/delta subunits family. MtnA subfamily.

The enzyme catalyses 5-(methylsulfanyl)-alpha-D-ribose 1-phosphate = 5-(methylsulfanyl)-D-ribulose 1-phosphate. Its pathway is amino-acid biosynthesis; L-methionine biosynthesis via salvage pathway; L-methionine from S-methyl-5-thio-alpha-D-ribose 1-phosphate: step 1/6. Its function is as follows. Catalyzes the interconversion of methylthioribose-1-phosphate (MTR-1-P) into methylthioribulose-1-phosphate (MTRu-1-P). The chain is Methylthioribose-1-phosphate isomerase from Gloeobacter violaceus (strain ATCC 29082 / PCC 7421).